A 511-amino-acid polypeptide reads, in one-letter code: MNLLSGWVRPLMLGCGLLGAALSAGSIQAAVCEYRVTNEWGSGFTASIRITNNGSSTINGWSVSWNYTDGSRVTSSWNAGLSGANPYSATPVGWNTSIPIGSSVEFGVQGNNGSSRAQVPAVTGAICGGQGSSAPSSVASSSSSSSVVSSTPRSSSSSVSSSVPGTSSSSSSSVLTGAQACNWYGTLTPLCNNTSNGWGYEDGRSCVARTTCSAQPAPYGIVSTSSSTPLSSSSSSRSSVASSSSLSSATSSSASSVSSVPPIDGGCNGYATRYWDCCKPHCGWSANVPSLVSPLQSCSANNTRLSDVSVGSSCDGGGGYMCWDKIPFAVSPTLAYGYAATSSGDVCGRCYQLQFTGSSYNAPGDPGSAALAGKTMIVQATNIGYDVSGGQFDILVPGGGVGAFNACSAQWGVSNAELGAQYGGFLAACKQQLGYNASLSQYKSCVLNRCDSVFGSRGLTQLQQGCTWFAEWFEAADNPSLKYKEVPCPAELTTRSGMNRSILNDIRNTCP.

An N-terminal signal peptide occupies residues 1–29 (MNLLSGWVRPLMLGCGLLGAALSAGSIQA). Residues 30-130 (AVCEYRVTNE…AVTGAICGGQ (101 aa)) form the CBM2 domain. Cys-32 and Cys-127 form a disulfide bridge. The segment at 137–173 (SVASSSSSSSVVSSTPRSSSSSVSSSVPGTSSSSSSS) is disordered. The 30-residue stretch at 180–209 (ACNWYGTLTPLCNNTSNGWGYEDGRSCVAR) folds into the CBM10 domain. Cystine bridges form between Cys-181-Cys-212 and Cys-191-Cys-206. The active-site Nucleophile is Asp-276. Asp-393 serves as the catalytic Proton donor.

The protein belongs to the glycosyl hydrolase 45 (cellulase K) family.

The protein resides in the periplasm. It catalyses the reaction Endohydrolysis of (1-&gt;4)-beta-D-glucosidic linkages in cellulose, lichenin and cereal beta-D-glucans.. Its function is as follows. This enzyme catalyzes the endohydrolysis of 1,4-beta-glucosidic linkages in cellulose, lichenin and cereal beta-D-glucans. EGB is most active against barley beta-glucan, but showed significant activity against amorphous and crystalline cellulose. This chain is Endoglucanase B (celB), found in Cellvibrio japonicus (strain Ueda107) (Pseudomonas fluorescens subsp. cellulosa).